A 788-amino-acid polypeptide reads, in one-letter code: Spastin (788 aa).

Residues 1–105 (MVRTKNQSSS…PRSAGGPSSV (105 aa)) are disordered. Residues 1 to 116 (MVRTKNQSSS…KQNLYVVSFP (116 aa)) are Cytoplasmic-facing. The segment at 1-227 (MVRTKNQSSS…NRSGSGYSPG (227 aa)) is required for localization to punctate cytoplasmic foci. Low complexity-rich tracts occupy residues 8–48 (SSSS…SSHR) and 57–75 (ATNV…SSPD). Positions 117–137 (IIFLFNVLRSLIYQLFCIFRY) form an intramembrane region, helical. Topologically, residues 138 to 788 (LYGASTKVIY…WSSDYGDITI (651 aa)) are cytoplasmic. The interval 227–788 (GPGDPLLAKQ…WSSDYGDITI (562 aa)) is sufficient for interaction with microtubules and microtubule severing. An MIT domain is found at 240–315 (HRRAFEYISK…SMARDRLHFL (76 aa)). Positions 331 to 353 (EKQKANESREQQQKPQKAREAAD) are enriched in basic and acidic residues. The tract at residues 331 to 484 (EKQKANESRE…SGSGSGASTP (154 aa)) is disordered. A compositionally biased stretch (low complexity) spans 387–400 (ATATTPTSSSSLAS). Composition is skewed to polar residues over residues 419-433 (NKSQ…SKTS) and 453-469 (QFSS…RTPI). Residues 471 to 485 (NNGASGSGSGASTPV) are required for interaction with microtubules. Residue 553–560 (GPPGNGKT) coordinates ATP.

The protein belongs to the AAA ATPase family. Spastin subfamily. In terms of assembly, homohexamer. The homohexamer is stabilized by ATP-binding. The homohexamer may adopt a ring conformation through which microtubules pass prior to being severed. Interacts with microtubules. Interacts with atl; may be involved in microtubule dynamics.

It is found in the membrane. The protein resides in the cytoplasm. The protein localises to the cytoskeleton. It localises to the microtubule organizing center. Its subcellular location is the centrosome. It is found in the chromosome. The protein resides in the lipid droplet. It catalyses the reaction n ATP + n H2O + a microtubule = n ADP + n phosphate + (n+1) alpha/beta tubulin heterodimers.. Functionally, ATP-dependent microtubule severing protein. Stimulates microtubule minus-end depolymerization and poleward microtubule flux in the mitotic spindle. Regulates microtubule stability in the neuromuscular junction synapse. Involved in lipid metabolism by regulating the size and distribution of lipid droplets. Involved in axon regeneration by regulating microtubule severing. In Drosophila persimilis (Fruit fly), this protein is Spastin.